A 487-amino-acid chain; its full sequence is MTDIVLNDLPFVDGPPAEGQSRISWIKNGEEILGADTQYGSEGSMNRPTVSVLRNVEVLDKNIGILKTSLETANSDIKTIQGILDVSGDIEALAQIGINKKDISDLKTLTSEHTEILNGTNNTVDSILADIGPFNAEANSVYRTIRNDLLWIKRELGQYTGQDINGLPVVGNPSSGMKHRIINNTDVITSQGIRLSELETKFIESDVGSLTIEVGNLREELGPKPPSFSQNVYSRLNEIDTKQTTVESDISAIKTSIGYPGNNSIITSVNTNTDNIASINLELNQSGGIKQRLTVIETSIGSDDIPSSIKGQIKDNTTSIESLNGIVGENTSSGLRANVSWLNQIVGTDSSGGQPSPPGSLLNRVSTIETSVSGLNNAVQNLQVEIGNNSAGIKGQVVALNTLVNGTNPNGSTVEERGLTNSIKANETNIASVTQEVNTAKGNISSLQGDVQALQEAGYIPEAPRDGQAYVRKDGEWVFLSTFLSPA.

13 coiled-coil regions span residues Val-52–Leu-84, Asn-99–Ile-131, Ile-145–Leu-156, Met-177–Leu-195, Leu-210–Leu-221, Val-232–Ile-257, Ile-265–Asn-284, Ile-289–Ile-300, Ile-309–Val-327, Leu-335–Val-346, Leu-361–Ile-386, Ile-393–Val-404, and Leu-419–Leu-454. A Glycyl lysine isopeptide (Lys-Gly) (interchain with G-Cter in host protein DncV) cross-link involves residue Lys-100.

In terms of assembly, homotrimer. Interacts (via N-terminal domain) with neck protein gp13; this interaction allows attachment of the fibrous collar and wiskers. Cross-linked via an isopeptide bond to E.coli host protein DncV during infection.

The protein resides in the virion. Functionally, chaperone involved in tail fiber assembly and retraction. Acts as a chaperone helping to attach the long tail fibers to the virus during the assembly process. During phage assembly, twelve fibritin molecules attach to the phage neck via gp13: six molecules forming the collar and six molecules forming the whiskers. In Enterobacteria phage T4 (Bacteriophage T4), this protein is Fibritin.